A 335-amino-acid chain; its full sequence is Leukocyte cell-derived chemotaxin-2 homolog (335 aa).

The N-terminal stretch at methionine 1 to threonine 20 is a signal peptide. 2 cysteine pairs are disulfide-bonded: cysteine 28/cysteine 66 and cysteine 39/cysteine 46. Residue aspartate 63 participates in Zn(2+) binding. N-linked (GlcNAc...) asparagine glycosylation occurs at asparagine 317.

The protein belongs to the LECT2/MIM-1 family. In terms of assembly, component of a multi-protein dma-1 receptor-ligand complex, which is activated upon binding of lect-2, mnr-1 and sax-7 ligands to promote the morphogenesis of dendrites which extend from the PVD neuronal body. Within the complex interacts with sax-7; the interaction is required for lect-2 dendritic localization and enhances the binding of the mnr-1 and sax-7 ligands to the dma-1 receptor-ligand complex. Expressed in body wall muscle cells, along the boundary of the lateral hypodermis, seam cells, processes of the nervous system including commissures, sensory dendrites in the head, and lateral nerve tracts, and motor neurons and some mechanosensory neurons such as ALM.

Its subcellular location is the secreted. The protein localises to the cell junction. It localises to the extracellular space. The protein resides in the extracellular matrix. It is found in the basement membrane. Its subcellular location is the cell projection. The protein localises to the dendrite. It localises to the perikaryon. The protein resides in the cell surface. In terms of biological role, muscle-derived dendritic guidance cue, which is required for the formation of somatosensory dendritic arbors which extend from PVD and FLP sensory neurons during development. Ligand of a multi-protein dma-1 receptor-ligand complex, which is activated upon binding of lect-2, mnr-1 and sax-7 ligands to control the growth of dendrites that extend anteriorly from the PVD neuronal cell body. Enhances the binding of the mnr-1 and sax-7 ligands to the dma-1 receptor-ligand complex. Restricts the growth of secondary PVD dendritic branches and any irregularly positioned ectopic tertiary dendritic branches that originate from secondary branches, and promotes the formation of stable higher order dendritic branches. In particular, it is required for the formation of quaternary PVD dendritic branches and promotes their innervation of body wall muscles. Promotes self-avoidance of tertiary dendritic branches of PVD sensory neurons. Not required for the growth of dendrites that extend from AIY and PVQ interneurons, DVB GABergic neurons, PLM and ALM mechanosensory neurons, AFD sensory neurons and DD/VD and DA/DB motor neurons. The protein is Leukocyte cell-derived chemotaxin-2 homolog of Caenorhabditis elegans.